A 312-amino-acid chain; its full sequence is G-protein coupled receptor BILF1 (312 aa).

Over 1 to 40 (MLSTMAPGSTVGTLVANMTSVNATEDACTKSYSAFLSGMT) the chain is Extracellular. 2 disulfides stabilise this stretch: cysteine 28–cysteine 258 and cysteine 97–cysteine 174. A helical transmembrane segment spans residues 41 to 61 (SLLLVLLILLTLAGILFIIFV). Residues 62–67 (RKLVHR) are Cytoplasmic-facing. Residues 68–88 (MDVWLIALLIELLLWVLGKMI) form a helical membrane-spanning segment. Over 89 to 95 (QEFSSTG) the chain is Extracellular. The chain crosses the membrane as a helical span at residues 96 to 116 (LCLLTQNMMFLGLMCSVWTHL). The Cytoplasmic segment spans residues 117-138 (GMALEKTLALFSRTPKRTSHRN). A helical transmembrane segment spans residues 139–159 (VCLYLMGVFCLVLLLIIILLI). Over 160–192 (TMGPDANLNRGPNMCREGPTKGMHTAVQGLKAG) the chain is Extracellular. The helical transmembrane segment at 193 to 213 (CYLLAAVLIVLLTVIIIWKLL) threads the bilayer. The Cytoplasmic portion of the chain corresponds to 214 to 228 (RTKFGRKPRLICNVT). Residues 229-249 (FTGLICAFSWFMLSLPLLFLG) form a helical membrane-spanning segment. Residues 250 to 269 (EAGSLGFDCTESLVARYYPG) are Extracellular-facing. The helical transmembrane segment at 270-290 (PAACLALLLIILYAWSFSHFM) threads the bilayer. Over 291-312 (DSLKNQVTVTARYFRRVPSQST) the chain is Cytoplasmic.

Belongs to the Epstein-Barr virus BILF1 protein family. Interacts with host CXCR4 to form higher-order heterooligomers. Interacts with host Gi heterotrimer.

The protein resides in the host cell membrane. The protein localises to the host mitochondrion outer membrane. Constitutively active, ligand-independent G protein-coupled receptor that has immunoevasive and oncogenic activities. Couples with the host inhibitory G protein (Gi) in order to disrupt the host chemokine signaling. As a consequence of its constitutive activity, mediates host CXCR4 inhibition. Enhances degradation of host major histocompatibility complex class I antigens via lysosomes, thereby modulating the antigen presentation to cytotoxic T cells. Targets selectively HLA-A, HLA-Band HLA-E molecules. Targets also newly synthesized MHC-I/peptide complexes en route to the host cell surface. Inhibits the host EIF2AK2/PKR phosphorylation. Displays tranforming activity. Utilizes its C-terminal tail to trigger host MAVS UFMylation via PARK2, resulting in selective MAVS removal from mitochondrial membranes and routing to lysosomes to prevent viral activation of the NLRP3 inflammasome. In Homo sapiens (Human), this protein is G-protein coupled receptor BILF1.